The primary structure comprises 35 residues: Photosystem II reaction center protein M (35 aa).

Residues 5–25 form a helical membrane-spanning segment; sequence ILAFVATALFILIPTAFLLIL.

The protein belongs to the PsbM family. In terms of assembly, PSII is composed of 1 copy each of membrane proteins PsbA, PsbB, PsbC, PsbD, PsbE, PsbF, PsbH, PsbI, PsbJ, PsbK, PsbL, PsbM, PsbT, PsbX, PsbY, PsbZ, Psb30/Ycf12, at least 3 peripheral proteins of the oxygen-evolving complex and a large number of cofactors. It forms dimeric complexes.

It localises to the plastid. It is found in the chloroplast thylakoid membrane. Functionally, one of the components of the core complex of photosystem II (PSII). PSII is a light-driven water:plastoquinone oxidoreductase that uses light energy to abstract electrons from H(2)O, generating O(2) and a proton gradient subsequently used for ATP formation. It consists of a core antenna complex that captures photons, and an electron transfer chain that converts photonic excitation into a charge separation. This subunit is found at the monomer-monomer interface. The polypeptide is Photosystem II reaction center protein M (Adiantum capillus-veneris (Maidenhair fern)).